The chain runs to 253 residues: Non-homologous end joining protein Ku (253 aa).

The Ku domain occupies 9–192; that stretch reads ISFGLVNIPV…EITEEELELA (184 aa).

This sequence belongs to the prokaryotic Ku family. In terms of assembly, homodimer. Interacts with LigD.

Functionally, with LigD forms a non-homologous end joining (NHEJ) DNA repair enzyme, which repairs dsDNA breaks with reduced fidelity. Binds linear dsDNA with 5'- and 3'- overhangs but not closed circular dsDNA nor ssDNA. Recruits and stimulates the ligase activity of LigD. The protein is Non-homologous end joining protein Ku of Archaeoglobus fulgidus (strain ATCC 49558 / DSM 4304 / JCM 9628 / NBRC 100126 / VC-16).